A 638-amino-acid chain; its full sequence is Polypeptide N-acetylgalactosaminyltransferase 15 (638 aa).

Topologically, residues 1–12 (MLPRKRPRSGRS) are cytoplasmic. Residues 13–35 (RLQFLLLFLTLGCVLMMVILLHP) traverse the membrane as a helical; Signal-anchor for type II membrane protein segment. Residues 36–638 (PPPTLHQAVT…FDQIHPVDER (603 aa)) are Lumenal-facing. Residues 134 to 157 (KDWRTEEDGEESEEVLTPLGPDSD) form a disordered region. Disulfide bonds link Cys-181–Cys-411, Cys-402–Cys-481, Cys-516–Cys-535, Cys-561–Cys-574, and Cys-602–Cys-619. The interval 190–299 (LPTASVILCF…PGWLEPLLSR (110 aa)) is catalytic subdomain A. Residues Asp-231 and Arg-260 each contribute to the substrate site. Asp-283, His-285, and His-416 together coordinate Mn(2+). The tract at residues 357-419 (PVRSPVVPRE…PCSRVGHIYR (63 aa)) is catalytic subdomain B. Arg-419 is a substrate binding site. The Ricin B-type lectin domain maps to 503 to 630 (RFSGKLHNTG…GKTSQLWRFD (128 aa)). Residue Asn-573 is glycosylated (N-linked (GlcNAc...) asparagine).

The protein belongs to the glycosyltransferase 2 family. GalNAc-T subfamily. Mn(2+) is required as a cofactor. In terms of tissue distribution, specifically expressed in testis.

The protein resides in the golgi apparatus membrane. The enzyme catalyses L-seryl-[protein] + UDP-N-acetyl-alpha-D-galactosamine = a 3-O-[N-acetyl-alpha-D-galactosaminyl]-L-seryl-[protein] + UDP + H(+). The catalysed reaction is L-threonyl-[protein] + UDP-N-acetyl-alpha-D-galactosamine = a 3-O-[N-acetyl-alpha-D-galactosaminyl]-L-threonyl-[protein] + UDP + H(+). It functions in the pathway protein modification; protein glycosylation. Its function is as follows. Catalyzes the initial reaction in O-linked oligosaccharide biosynthesis, the transfer of an N-acetyl-D-galactosamine residue to a serine or threonine residue on the protein receptor. Although it displays a much weaker activity toward all substrates tested compared to GALNT2, it is able to transfer up to seven GalNAc residues to the Muc5AC peptide, suggesting that it can fill vicinal Thr/Ser residues in cooperation with other GALNT proteins. Prefers Muc1a as substrate. In Mus musculus (Mouse), this protein is Polypeptide N-acetylgalactosaminyltransferase 15 (Galnt15).